The sequence spans 233 residues: Homeobox protein EMX1 (233 aa).

A DNA-binding region (homeobox) is located at residues 135–194 (PKRIRTAFSPSQLLRLERAFEKNHYVVGAERKQLASSLSLSETQVKVWFQNRRTKYKRQK). The segment at 192–233 (RQKLEEEGPDSDQKKKGSHHINRWRLATKQPNGEDIDVTSND) is disordered. Basic and acidic residues predominate over residues 193–206 (QKLEEEGPDSDQKK).

Belongs to the EMX homeobox family.

Its subcellular location is the nucleus. May function in combinations with OTX1/2 to specify cell fates in the developing central nervous system. In Xenopus tropicalis (Western clawed frog), this protein is Homeobox protein EMX1 (emx1).